We begin with the raw amino-acid sequence, 852 residues long: Probable nitrite reductase-hydroxylamine oxidoreductase fusion protein (852 aa).

The N-terminal stretch at 1 to 27 is a signal peptide; sequence MLNKSAALVPVVLAFLFLFLCFQCLYA. The tract at residues 28–327 is nitrite reductase domain; it reads DIRCLTGKDG…DEGRKTLSAP (300 aa). 2 consecutive Plastocyanin-like domains span residues 72-169 and 217-307; these read VPGP…IVEP and GETW…VEEG. His102 and His145 together coordinate Cu cation. Residues 328–827 form a hydroxylamine oxidoreductase domain region; it reads GQDRQPPTLE…ISWWWGTAQG (500 aa). Residues Cys406, Cys409, His410, His426, Cys463, Cys466, His467, His471, Cys483, Cys486, His487, His505, His537, Cys543, Cys546, His547, His550, Cys563, Cys566, His567, Cys614, Cys617, His618, Cys686, Cys689, His690, and His813 each coordinate heme.

This sequence in the N-terminal section; belongs to the multicopper oxidase family. Requires Cu cation as cofactor. Heme serves as cofactor.

The protein resides in the encapsulin nanocompartment. The catalysed reaction is hydroxylamine + 4 Fe(III)-[cytochrome c] + H2O = 4 Fe(II)-[cytochrome c] + nitrite + 5 H(+). It carries out the reaction nitric oxide + Fe(III)-[cytochrome c] + H2O = Fe(II)-[cytochrome c] + nitrite + 2 H(+). A nitrite reductase-hydroxylamine oxidoreductase protein that probably functions in the type 1 encapsulin nanocompartment. Probably involved in reductive catalysis. Targeted to the encapsulin nanocompartment by association with the diheme domain of the encapsulin shell protein (AC Q1Q6L7). Catalyzes the reduction of nitrite to nitric oxide (NO). Catalyzes the oxidation of hydroxylamine to nitrite. The sequence is that of Probable nitrite reductase-hydroxylamine oxidoreductase fusion protein from Kuenenia stuttgartiensis.